The chain runs to 252 residues: Imidazole glycerol phosphate synthase subunit HisF (252 aa).

Residues Asp11 and Asp130 contribute to the active site.

The protein belongs to the HisA/HisF family. Heterodimer of HisH and HisF.

Its subcellular location is the cytoplasm. It carries out the reaction 5-[(5-phospho-1-deoxy-D-ribulos-1-ylimino)methylamino]-1-(5-phospho-beta-D-ribosyl)imidazole-4-carboxamide + L-glutamine = D-erythro-1-(imidazol-4-yl)glycerol 3-phosphate + 5-amino-1-(5-phospho-beta-D-ribosyl)imidazole-4-carboxamide + L-glutamate + H(+). Its pathway is amino-acid biosynthesis; L-histidine biosynthesis; L-histidine from 5-phospho-alpha-D-ribose 1-diphosphate: step 5/9. In terms of biological role, IGPS catalyzes the conversion of PRFAR and glutamine to IGP, AICAR and glutamate. The HisF subunit catalyzes the cyclization activity that produces IGP and AICAR from PRFAR using the ammonia provided by the HisH subunit. In Bacillus anthracis (strain CDC 684 / NRRL 3495), this protein is Imidazole glycerol phosphate synthase subunit HisF.